A 316-amino-acid chain; its full sequence is UPF0725 protein At1g02770 (316 aa).

This sequence belongs to the UPF0725 (EMB2204) family.

The sequence is that of UPF0725 protein At1g02770 from Arabidopsis thaliana (Mouse-ear cress).